A 73-amino-acid chain; its full sequence is Translational regulator CsrA (73 aa).

This sequence belongs to the CsrA/RsmA family. In terms of assembly, homodimer; the beta-strands of each monomer intercalate to form a hydrophobic core, while the alpha-helices form wings that extend away from the core.

The protein resides in the cytoplasm. Functionally, a translational regulator that binds mRNA to regulate translation initiation and/or mRNA stability. Usually binds in the 5'-UTR at or near the Shine-Dalgarno sequence preventing ribosome-binding, thus repressing translation. Its main target seems to be the major flagellin gene, while its function is anatagonized by FliW. The polypeptide is Translational regulator CsrA (Clostridium kluyveri (strain NBRC 12016)).